A 341-amino-acid polypeptide reads, in one-letter code: Keratin-associated protein 29-1 (341 aa).

Repeat copies occupy residues cysteine 5–asparagine 9, cysteine 115–lysine 119, cysteine 120–serine 124, cysteine 150–glycine 154, cysteine 240–serine 244, cysteine 276–alanine 280, and cysteine 307–glycine 311. The segment at cysteine 5 to glycine 311 is 7 X 5 AA repeats of C-C-X(3).

The protein belongs to the KRTAP type 10 family.

The sequence is that of Keratin-associated protein 29-1 (KRTAP29-1) from Homo sapiens (Human).